Consider the following 260-residue polypeptide: MHRMEQRLEIEQFICRSDNYGVLIHDPESALTATIDAPDAYAIEAALERRGWTLDFIFTTHHHLDHVEGNEPLKEKFGVSIIGPEAEKAKIPGIDRTVKGGDEFTFGLFKVKVISTPGHTAGGISYYLPDAKVVFTGDTLFALGCGRLFEGTPATMFHSLEKLVALPGDTALYCGHEYTQNNARFALTIDPDNSALKERAKEIARLRAHERMTLPSTIALEMATNPFLRWHDRTIRARLGLQDAPDEAVFAEIRKRKDMF.

Zn(2+) contacts are provided by H61, H63, D65, H66, H119, D138, and H176.

Belongs to the metallo-beta-lactamase superfamily. Glyoxalase II family. Monomer. It depends on Zn(2+) as a cofactor.

The catalysed reaction is an S-(2-hydroxyacyl)glutathione + H2O = a 2-hydroxy carboxylate + glutathione + H(+). It functions in the pathway secondary metabolite metabolism; methylglyoxal degradation; (R)-lactate from methylglyoxal: step 2/2. In terms of biological role, thiolesterase that catalyzes the hydrolysis of S-D-lactoyl-glutathione to form glutathione and D-lactic acid. This Brucella suis (strain ATCC 23445 / NCTC 10510) protein is Hydroxyacylglutathione hydrolase.